Reading from the N-terminus, the 172-residue chain is General stress protein 18 (172 aa).

A PfpI endopeptidase domain is found at 3–171 (KKIAVVLTYY…FNRESLALLE (169 aa)). The active-site Nucleophile is the C104. Residue H105 is part of the active site.

Belongs to the peptidase C56 family.

In terms of biological role, functions in the protection against aldehyde-stress, possibly by degrading damaged proteins. This is General stress protein 18 (yfkM) from Bacillus subtilis (strain 168).